Here is a 276-residue protein sequence, read N- to C-terminus: Energy-coupling factor transporter ATP-binding protein EcfA1 (276 aa).

One can recognise an ABC transporter domain in the interval 2 to 237 (IEIKNLKFKY…GSELVDLGLD (236 aa)). Residue 37 to 44 (GHNGSGKS) participates in ATP binding.

It belongs to the ABC transporter superfamily. Energy-coupling factor EcfA family. In terms of assembly, forms a stable energy-coupling factor (ECF) transporter complex composed of 2 membrane-embedded substrate-binding proteins (S component), 2 ATP-binding proteins (A component) and 2 transmembrane proteins (T component).

Its subcellular location is the cell membrane. Its function is as follows. ATP-binding (A) component of a common energy-coupling factor (ECF) ABC-transporter complex. Unlike classic ABC transporters this ECF transporter provides the energy necessary to transport a number of different substrates. This chain is Energy-coupling factor transporter ATP-binding protein EcfA1, found in Streptococcus thermophilus (strain CNRZ 1066).